Here is a 571-residue protein sequence, read N- to C-terminus: Proline--tRNA ligase (571 aa).

The protein belongs to the class-II aminoacyl-tRNA synthetase family. ProS type 1 subfamily. As to quaternary structure, homodimer.

The protein resides in the cytoplasm. It catalyses the reaction tRNA(Pro) + L-proline + ATP = L-prolyl-tRNA(Pro) + AMP + diphosphate. Its function is as follows. Catalyzes the attachment of proline to tRNA(Pro) in a two-step reaction: proline is first activated by ATP to form Pro-AMP and then transferred to the acceptor end of tRNA(Pro). As ProRS can inadvertently accommodate and process non-cognate amino acids such as alanine and cysteine, to avoid such errors it has two additional distinct editing activities against alanine. One activity is designated as 'pretransfer' editing and involves the tRNA(Pro)-independent hydrolysis of activated Ala-AMP. The other activity is designated 'posttransfer' editing and involves deacylation of mischarged Ala-tRNA(Pro). The misacylated Cys-tRNA(Pro) is not edited by ProRS. In Vibrio atlanticus (strain LGP32) (Vibrio splendidus (strain Mel32)), this protein is Proline--tRNA ligase.